We begin with the raw amino-acid sequence, 203 residues long: Octanoyltransferase (203 aa).

Positions 32-203 (ISTPDEIWLV…LMHKIREIFS (172 aa)) constitute a BPL/LPL catalytic domain. Substrate contacts are provided by residues 71 to 78 (RGGKITYH), 138 to 140 (SLG), and 151 to 153 (GMA). Residue C169 is the Acyl-thioester intermediate of the active site.

This sequence belongs to the LipB family.

The protein resides in the cytoplasm. The enzyme catalyses octanoyl-[ACP] + L-lysyl-[protein] = N(6)-octanoyl-L-lysyl-[protein] + holo-[ACP] + H(+). Its pathway is protein modification; protein lipoylation via endogenous pathway; protein N(6)-(lipoyl)lysine from octanoyl-[acyl-carrier-protein]: step 1/2. Its function is as follows. Catalyzes the transfer of endogenously produced octanoic acid from octanoyl-acyl-carrier-protein onto the lipoyl domains of lipoate-dependent enzymes. Lipoyl-ACP can also act as a substrate although octanoyl-ACP is likely to be the physiological substrate. The chain is Octanoyltransferase from Buchnera aphidicola subsp. Baizongia pistaciae (strain Bp).